Reading from the N-terminus, the 475-residue chain is Zinc finger protein 296 (475 aa).

The disordered stretch occupies residues 1-78 (MSRRKAGSAP…SPGPMPAGAA (78 aa)). Residue Lys-35 forms a Glycyl lysine isopeptide (Lys-Gly) (interchain with G-Cter in SUMO2) linkage. 3 consecutive C2H2-type zinc fingers follow at residues 157-180 (LSCLRCGKQFTVAWKLLRHAQWDH), 231-253 (PTCPVCKKTLSSFSNLKVHMRSH), and 259-281 (YACDQCPYACAQSSKLNRHKKTH). A disordered region spans residues 275 to 385 (NRHKKTHRQV…KSGGKSRGPG (111 aa)). 2 stretches are compositionally biased toward low complexity: residues 295–313 (SQEQASAAPPEPAVHAAAP) and 326–338 (GAAATAGVQEPGA). Positions 339 to 351 (PGSGAQAGPGGDT) are enriched in gly residues. Polar residues predominate over residues 354 to 367 (AITTEQRTDPANSQ). 3 C2H2-type zinc fingers span residues 386–408 (GSCEFCGKHFTNSSNLTVHRRSH), 414–436 (YTCEFCNYACAQSSKLNRHRRMH), and 445–468 (FECPHCHVPFGLRATLDKHLRQKH).

Belongs to the krueppel C2H2-type zinc-finger protein family. In terms of assembly, interacts with KLF4.

Its subcellular location is the nucleus. May be a transcriptional corepressor with KLF4. The sequence is that of Zinc finger protein 296 (ZNF296) from Homo sapiens (Human).